The following is a 199-amino-acid chain: Protein GrpE (199 aa).

Over residues 1 to 24 the composition is skewed to basic and acidic residues; sequence MSKQNKKDWKKFKDEHKEEHKVEN. A disordered region spans residues 1–47; that stretch reads MSKQNKKDWKKFKDEHKEEHKVENEILEEEIDEKSQHQEPALGHPSY.

Belongs to the GrpE family. Homodimer.

The protein resides in the cytoplasm. In terms of biological role, participates actively in the response to hyperosmotic and heat shock by preventing the aggregation of stress-denatured proteins, in association with DnaK and GrpE. It is the nucleotide exchange factor for DnaK and may function as a thermosensor. Unfolded proteins bind initially to DnaJ; upon interaction with the DnaJ-bound protein, DnaK hydrolyzes its bound ATP, resulting in the formation of a stable complex. GrpE releases ADP from DnaK; ATP binding to DnaK triggers the release of the substrate protein, thus completing the reaction cycle. Several rounds of ATP-dependent interactions between DnaJ, DnaK and GrpE are required for fully efficient folding. In Legionella pneumophila (strain Paris), this protein is Protein GrpE.